We begin with the raw amino-acid sequence, 785 residues long: Probable splicing factor 3A subunit 1 (785 aa).

The residue at position 1 (methionine 1) is an N-acetylmethionine. Positions 1-42 (MFSSMQILPLEAPPTDGKLGPLPPSQLTDQEVEERELQAEQN) are disordered. One copy of the SURP motif 1 repeat lies at 71–113 (IVEKTAQFVSKNGLEFEKRIIVSNEKNAKFNFLKSSDPYHAFY). A disordered region spans residues 124–175 (NKDGAQGTDDSDGTTDPQLDTGAADESEAGDTQPDLQAQFRIPSKPLEAPEP). An SURP motif 2 repeat occupies 193 to 235 (IIKLTAQFVARNGKSFLTGLSNRENNNPQFHFMKPTHSMFTFF). Disordered stretches follow at residues 522 to 554 (NANG…GVPI) and 639 to 713 (RPYG…PNEN). 2 stretches are compositionally biased toward pro residues: residues 543–554 (AALPPPRPGVPI) and 653–674 (QPPP…PPLP). The span at 677-686 (PEAKRQKFDE) shows a compositional bias: basic and acidic residues. The Ubiquitin-like domain occupies 707-782 (VSKPNENDGQ…LTLSLRERGG (76 aa)).

Component of splicing factor SF3A which is composed of three subunits.

The protein localises to the nucleus. The polypeptide is Probable splicing factor 3A subunit 1 (Arabidopsis thaliana (Mouse-ear cress)).